The following is a 177-amino-acid chain: Putative adenylate kinase (177 aa).

ATP is bound by residues Gly-10, Gly-12, Lys-13, Thr-14, and Thr-15. Positions Asn-30 to Ile-50 are NMP. Residues Glu-99–Glu-109 form an LID region. ATP is bound by residues Arg-100 and Lys-138.

It belongs to the adenylate kinase family. AK6 subfamily. As to quaternary structure, interacts with uS11. Not a structural component of 40S pre-ribosomes, but transiently interacts with them by binding to uS11.

It catalyses the reaction AMP + ATP = 2 ADP. It carries out the reaction ATP + H2O = ADP + phosphate + H(+). Broad-specificity nucleoside monophosphate (NMP) kinase that catalyzes the reversible transfer of the terminal phosphate group between nucleoside triphosphates and monophosphates. Also has ATPase activity. Involved in the late maturation steps of the 30S ribosomal particles, specifically 16S rRNA maturation. While NMP activity is not required for ribosome maturation, ATPase activity is. Associates transiently with small ribosomal subunit protein uS11. ATP hydrolysis breaks the interaction with uS11. May temporarily remove uS11 from the ribosome to enable a conformational change of the ribosomal RNA that is needed for the final maturation step of the small ribosomal subunit. The polypeptide is Putative adenylate kinase (Thermococcus kodakarensis (strain ATCC BAA-918 / JCM 12380 / KOD1) (Pyrococcus kodakaraensis (strain KOD1))).